The sequence spans 399 residues: Probable sugar efflux transporter (399 aa).

A run of 12 helical transmembrane segments spans residues 15-35 (VVTL…PVGL), 50-70 (VGMM…PFML), 81-101 (LIGL…AWNF), 103-123 (VLVI…SITS), 136-156 (AQAL…GIPI), 168-188 (MTFL…VKLL), 209-229 (PALV…YTAY), 246-266 (FATV…ILFG), 273-293 (ASGL…LLLP), 301-321 (LMLL…GMQV), 333-353 (VAMS…ALVG), and 364-384 (SVGY…LMIF).

Belongs to the major facilitator superfamily. SotB (TC 2.A.1.2) family.

It localises to the cell inner membrane. In terms of biological role, involved in the efflux of sugars. The physiological role may be the reduction of the intracellular concentration of toxic sugars or sugar metabolites. The polypeptide is Probable sugar efflux transporter (Klebsiella pneumoniae subsp. pneumoniae (strain ATCC 700721 / MGH 78578)).